The primary structure comprises 430 residues: MDAELPHSMIGSYLNPPERMYLPSFSQTEASQNCHPGSSPKMFNSPNNQALVSALKTLQEKIRRLELERTQAEDNLNLLSREAAQYKKALEEETNERNLAHEELTRQKKDISIQLSSAQSRCILLEKQLEYTKRMVLNVEREKNMILEQQAQLQREKEQDQMKLHAKLEKLDVLEKECLRLTTTQQTAEEKIKYLEEKLKEEEHQRRLFQDRACELQTGLEISKILMSTVSSSKLCNERKKLPKKTNCLKREPPQHTDCRFRGPASERERPPFRMTSSARAEPHSSGEPFSICDNLSELLRTMQDELDQMNMEHRELLRQIAQTGSHSDSEELEQELEHLARKMESKEDQISKLQKHQDRVRKLQEKVENSRINESSGIHGNPKRSKNLKTSPRKCLSETSAFQKDRSFQPVKVHSLPPRLRRDDVKWEQ.

Ser-45 is subject to Phosphoserine. Positions 46–213 (PNNQALVSAL…HQRRLFQDRA (168 aa)) form a coiled coil. Disordered regions lie at residues 248-290 (CLKR…GEPF) and 362-430 (RKLQ…KWEQ). 3 stretches are compositionally biased toward basic and acidic residues: residues 249 to 272 (LKRE…ERPP), 362 to 372 (RKLQEKVENSR), and 421 to 430 (LRRDDVKWEQ). Positions 290–377 (FSICDNLSEL…VENSRINESS (88 aa)) form a coiled coil.

The protein belongs to the translokin family.

Its subcellular location is the cytoplasm. The protein localises to the cytoskeleton. The protein resides in the microtubule organizing center. It is found in the centrosome. Centrosomal protein which may be required for microtubule attachment to centrosomes. This chain is Centrosomal protein CEP57L1 (Cep57l1), found in Rattus norvegicus (Rat).